An 876-amino-acid chain; its full sequence is Leucine--tRNA ligase (876 aa).

Residues Pro42–His52 carry the 'HIGH' region motif. The 'KMSKS' region signature appears at Lys634–Ser638. Position 637 (Lys637) interacts with ATP.

It belongs to the class-I aminoacyl-tRNA synthetase family.

Its subcellular location is the cytoplasm. It carries out the reaction tRNA(Leu) + L-leucine + ATP = L-leucyl-tRNA(Leu) + AMP + diphosphate. In Neisseria gonorrhoeae (strain NCCP11945), this protein is Leucine--tRNA ligase.